The chain runs to 132 residues: Small ribosomal subunit protein uS8 (132 aa).

The protein belongs to the universal ribosomal protein uS8 family. Part of the 30S ribosomal subunit. Contacts proteins S5 and S12.

In terms of biological role, one of the primary rRNA binding proteins, it binds directly to 16S rRNA central domain where it helps coordinate assembly of the platform of the 30S subunit. The polypeptide is Small ribosomal subunit protein uS8 (Streptococcus thermophilus (strain CNRZ 1066)).